The chain runs to 163 residues: NADH-quinone oxidoreductase subunit I (163 aa).

4Fe-4S ferredoxin-type domains are found at residues 53–83 (LRRY…IEAG) and 94–123 (VRYD…EGPN). [4Fe-4S] cluster is bound by residues Cys63, Cys66, Cys69, Cys73, Cys103, Cys106, Cys109, and Cys113.

It belongs to the complex I 23 kDa subunit family. As to quaternary structure, NDH-1 is composed of 14 different subunits. Subunits NuoA, H, J, K, L, M, N constitute the membrane sector of the complex. It depends on [4Fe-4S] cluster as a cofactor.

The protein resides in the cell inner membrane. The catalysed reaction is a quinone + NADH + 5 H(+)(in) = a quinol + NAD(+) + 4 H(+)(out). In terms of biological role, NDH-1 shuttles electrons from NADH, via FMN and iron-sulfur (Fe-S) centers, to quinones in the respiratory chain. The immediate electron acceptor for the enzyme in this species is believed to be ubiquinone. Couples the redox reaction to proton translocation (for every two electrons transferred, four hydrogen ions are translocated across the cytoplasmic membrane), and thus conserves the redox energy in a proton gradient. This chain is NADH-quinone oxidoreductase subunit I, found in Brucella suis (strain ATCC 23445 / NCTC 10510).